The chain runs to 376 residues: Putative F-box only protein 9 (376 aa).

Positions 1–44 constitute an F-box domain; the sequence is MSDLPPDLVEDILSRVPATSLKRLRFTCKQWNSLFKNRRFTEKH.

This Arabidopsis thaliana (Mouse-ear cress) protein is Putative F-box only protein 9 (FBX9).